Reading from the N-terminus, the 424-residue chain is UPF0229 protein PFL_5654 (424 aa).

Residues 85-108 (GEHIARPQGGGGGGGGRGKAGNSG) form a disordered region. Positions 92-108 (QGGGGGGGGRGKAGNSG) are enriched in gly residues.

This sequence belongs to the UPF0229 family.

The chain is UPF0229 protein PFL_5654 from Pseudomonas fluorescens (strain ATCC BAA-477 / NRRL B-23932 / Pf-5).